The sequence spans 453 residues: Charged multivesicular body protein 7 (453 aa).

A disordered region spans residues methionine 1–proline 22. Positions alanine 10–proline 22 are enriched in low complexity. Serine 232 is subject to Phosphoserine. The stretch at glutamine 243–isoleucine 312 forms a coiled coil. A compositionally biased stretch (basic and acidic residues) spans threonine 392–arginine 403. Disordered stretches follow at residues threonine 392–serine 417 and serine 431–leucine 453. Threonine 408 is subject to Phosphothreonine. Phosphoserine is present on residues serine 410, serine 417, serine 431, and serine 441.

Belongs to the SNF7 family. As to quaternary structure, interacts with CHMP4B, but not with VPS25. Interacts with LEMD2 (via C-terminus).

The protein localises to the cytoplasm. It is found in the nucleus envelope. In terms of biological role, ESCRT-III-like protein required to recruit the ESCRT-III complex to the nuclear envelope (NE) during late anaphase. Together with SPAST, the ESCRT-III complex promotes NE sealing and mitotic spindle disassembly during late anaphase. Recruited to the reforming NE during anaphase by LEMD2. Plays a role in the endosomal sorting pathway. The chain is Charged multivesicular body protein 7 (CHMP7) from Homo sapiens (Human).